The sequence spans 221 residues: Ribonuclease S-2 (221 aa).

The N-terminal stretch at 1–20 (MIYIFTMVFSLNVLILSSSA) is a signal peptide. Residue Gln-31 participates in RNA binding. Cys-37 and Cys-44 are joined by a disulfide. RNA is bound by residues His-55, 91 to 92 (NV), Phe-101, 104 to 105 (KQ), and 108 to 109 (KH). Catalysis depends on His-55, which acts as the Proton donor. Cys-70 and Cys-112 are disulfide-bonded. Asn-91 carries an N-linked (GlcNAc...) asparagine glycan. The active site involves Gln-105. The Proton acceptor role is filled by His-109. N-linked (GlcNAc...) asparagine glycans are attached at residues Asn-137, Asn-153, and Asn-195. 2 disulfides stabilise this stretch: Cys-176–Cys-214 and Cys-191–Cys-202.

It belongs to the RNase T2 family. In terms of processing, N-linked core structure at Asn-91, Asn-137, and Asn-153 contains xylose and at Asn-195 contains xylose and fucose.

It localises to the secreted. It is found in the extracellular space. The enzyme catalyses a ribonucleotidyl-ribonucleotide-RNA + H2O = a 3'-end 3'-phospho-ribonucleotide-RNA + a 5'-end dephospho-ribonucleoside-RNA + H(+). Self-incompatibility (SI) is the inherited ability of a flowering plant to prevent self-fertilization by discriminating between self and non-self pollen during pollination. In many species, self-incompatibility is controlled by the single, multiallelic locus S. This chain is Ribonuclease S-2, found in Pyrus pyrifolia (Chinese pear).